The primary structure comprises 308 residues: Ribosomal RNA large subunit methyltransferase F (308 aa).

The protein belongs to the methyltransferase superfamily. METTL16/RlmF family.

It is found in the cytoplasm. The enzyme catalyses adenosine(1618) in 23S rRNA + S-adenosyl-L-methionine = N(6)-methyladenosine(1618) in 23S rRNA + S-adenosyl-L-homocysteine + H(+). Specifically methylates the adenine in position 1618 of 23S rRNA. In Salmonella arizonae (strain ATCC BAA-731 / CDC346-86 / RSK2980), this protein is Ribosomal RNA large subunit methyltransferase F.